Here is a 461-residue protein sequence, read N- to C-terminus: Chromosomal replication initiator protein DnaA (461 aa).

Positions 1-87 are domain I, interacts with DnaA modulators; sequence MAVSLWQQCI…IGSRPSAKPV (87 aa). Residues 87–124 are domain II; it reads VVQATAAIRPKPAASKAVEKPTFNAPQAEPAITANHRS. The interval 125–341 is domain III, AAA+ region; that stretch reads NINPTYQFDN…GALNRVIANA (217 aa). ATP-binding residues include Gly169, Gly171, Lys172, and Thr173. Residues 342-461 form a domain IV, binds dsDNA region; the sequence is NFTGRPITID…YANLIRTLSS (120 aa).

It belongs to the DnaA family. In terms of assembly, oligomerizes as a right-handed, spiral filament on DNA at oriC.

Its subcellular location is the cytoplasm. Plays an essential role in the initiation and regulation of chromosomal replication. ATP-DnaA binds to the origin of replication (oriC) to initiate formation of the DNA replication initiation complex once per cell cycle. Binds the DnaA box (a 9 base pair repeat at the origin) and separates the double-stranded (ds)DNA. Forms a right-handed helical filament on oriC DNA; dsDNA binds to the exterior of the filament while single-stranded (ss)DNA is stabiized in the filament's interior. The ATP-DnaA-oriC complex binds and stabilizes one strand of the AT-rich DNA unwinding element (DUE), permitting loading of DNA polymerase. After initiation quickly degrades to an ADP-DnaA complex that is not apt for DNA replication. Binds acidic phospholipids. The sequence is that of Chromosomal replication initiator protein DnaA from Shewanella piezotolerans (strain WP3 / JCM 13877).